The primary structure comprises 139 residues: Holo-[acyl-carrier-protein] synthase (139 aa).

Aspartate 8 and glutamate 57 together coordinate Mg(2+).

It belongs to the P-Pant transferase superfamily. AcpS family. Mg(2+) serves as cofactor.

The protein localises to the cytoplasm. It catalyses the reaction apo-[ACP] + CoA = holo-[ACP] + adenosine 3',5'-bisphosphate + H(+). Transfers the 4'-phosphopantetheine moiety from coenzyme A to a Ser of acyl-carrier-protein. The chain is Holo-[acyl-carrier-protein] synthase from Rhizobium meliloti (strain 1021) (Ensifer meliloti).